Here is a 126-residue protein sequence, read N- to C-terminus: Transcription antitermination protein NusB (126 aa).

It belongs to the NusB family.

Involved in transcription antitermination. Required for transcription of ribosomal RNA (rRNA) genes. Binds specifically to the boxA antiterminator sequence of the ribosomal RNA (rrn) operons. This Oceanobacillus iheyensis (strain DSM 14371 / CIP 107618 / JCM 11309 / KCTC 3954 / HTE831) protein is Transcription antitermination protein NusB.